A 975-amino-acid chain; its full sequence is Cation-chloride cotransporter 1 (975 aa).

Disordered regions lie at residues M1–R29 and E104–H124. Residues M1–M132 lie on the Cytoplasmic side of the membrane. Residues G133–I153 form a helical membrane-spanning segment. Topologically, residues R154 to G167 are extracellular. The chain crosses the membrane as a helical span at residues L168–I188. Over A189 to S214 the chain is Cytoplasmic. A helical transmembrane segment spans residues I215 to V235. The Extracellular portion of the chain corresponds to E236–Q273. An N-linked (GlcNAc...) asparagine glycan is attached at N256. The chain crosses the membrane as a helical span at residues V274–I294. Topologically, residues N295–R296 are cytoplasmic. A helical membrane pass occupies residues V297–F317. At L318–T359 the chain is on the extracellular side. The chain crosses the membrane as a helical span at residues Y360 to G380. Topologically, residues S381–T398 are cytoplasmic. The helical transmembrane segment at L399–V419 threads the bilayer. Over A420 to T434 the chain is Extracellular. The chain crosses the membrane as a helical span at residues I435–A455. Residues L456–H490 lie on the Cytoplasmic side of the membrane. A helical transmembrane segment spans residues I491–L511. Residues I512–T515 are Extracellular-facing. The chain crosses the membrane as a helical span at residues V516–L536. At L537–P544 the chain is on the cytoplasmic side. Residues R545–M565 traverse the membrane as a helical segment. The Extracellular segment spans residues F566–S571. Residues F572–K592 traverse the membrane as a helical segment. Residues A593–T975 lie on the Cytoplasmic side of the membrane.

This sequence belongs to the SLC12A transporter family. Expressed in young seedlings cotyledon tips, plant vasculature, root tips and axillary buds. Expressed in root vascular strand in the pericycle and other parenchyma cells bordering xylem vessels. Expressed in the xylem/symplast boundaries of rosette stems, rosette leaves and cauline leaves. Expressed in stipules, trichomes and hydathodes. Expressed in pollen grains.

It is found in the membrane. In terms of biological role, cation/chloride cotransporter that mediates potassium-chloride and sodium-chloride cotransports. Involved in plant development and Cl(-) homeostasis. May be involved in long distance Cl(-) transport. Does not function as an H(+)-dependent cotransporter. The polypeptide is Cation-chloride cotransporter 1 (CCC1) (Arabidopsis thaliana (Mouse-ear cress)).